The following is a 260-amino-acid chain: Thiazole synthase (260 aa).

The Schiff-base intermediate with DXP role is filled by lysine 100. 1-deoxy-D-xylulose 5-phosphate contacts are provided by residues glycine 162, 188 to 189, and 210 to 211; these read AG and NT.

Belongs to the ThiG family. Homotetramer. Forms heterodimers with either ThiH or ThiS.

It localises to the cytoplasm. It carries out the reaction [ThiS sulfur-carrier protein]-C-terminal-Gly-aminoethanethioate + 2-iminoacetate + 1-deoxy-D-xylulose 5-phosphate = [ThiS sulfur-carrier protein]-C-terminal Gly-Gly + 2-[(2R,5Z)-2-carboxy-4-methylthiazol-5(2H)-ylidene]ethyl phosphate + 2 H2O + H(+). It functions in the pathway cofactor biosynthesis; thiamine diphosphate biosynthesis. Catalyzes the rearrangement of 1-deoxy-D-xylulose 5-phosphate (DXP) to produce the thiazole phosphate moiety of thiamine. Sulfur is provided by the thiocarboxylate moiety of the carrier protein ThiS. In vitro, sulfur can be provided by H(2)S. This is Thiazole synthase from Wolinella succinogenes (strain ATCC 29543 / DSM 1740 / CCUG 13145 / JCM 31913 / LMG 7466 / NCTC 11488 / FDC 602W) (Vibrio succinogenes).